The chain runs to 265 residues: NAD kinase 1 (265 aa).

The active-site Proton acceptor is the D45. NAD(+)-binding positions include 45–46 (DG), 122–123 (NE), R148, D150, and A185.

This sequence belongs to the NAD kinase family. Requires a divalent metal cation as cofactor.

The protein localises to the cytoplasm. The enzyme catalyses NAD(+) + ATP = ADP + NADP(+) + H(+). In terms of biological role, involved in the regulation of the intracellular balance of NAD and NADP, and is a key enzyme in the biosynthesis of NADP. Catalyzes specifically the phosphorylation on 2'-hydroxyl of the adenosine moiety of NAD to yield NADP. In Bacillus anthracis, this protein is NAD kinase 1.